The primary structure comprises 719 residues: Protein STRUBBELIG-RECEPTOR FAMILY 6 (719 aa).

Positions 1-29 (MRENWAVVALFTLCIVGFELRFIHGATDA) are cleaved as a signal peptide. Residues 30 to 293 (SDTSALNTLF…SKKSGIGAGA (264 aa)) are Extracellular-facing. LRR repeat units lie at residues 97–118 (SLTE…QFPP), 119–140 (NLQR…SLSQ), 143–164 (PLKY…DFSK), 167–190 (SLTT…SSLT), 191–213 (SLKS…AGLP), and 214–234 (LETL…SLKG). Positions 242–287 (NSFNTGPAPPPPPGTPPIRGSPSRKSGGRESRSSDESTRNGDSKKS) are disordered. Residues 248-257 (PAPPPPPGTP) show a composition bias toward pro residues. Over residues 268-286 (GGRESRSSDESTRNGDSKK) the composition is skewed to basic and acidic residues. Residues 294–314 (IAGIIISLLVVTALLVAFFLF) traverse the membrane as a helical segment. Residues 315–719 (RRKKSKRSSP…GSADTTSDYM (405 aa)) lie on the Cytoplasmic side of the membrane. Disordered regions lie at residues 322–355 (SSPM…SSVE) and 364–383 (SINL…DEDS). The segment covering 332 to 354 (NQPFTLASNDFHENNSIQSSSSV) has biased composition (polar residues). Residue Ser377 is modified to Phosphoserine. Positions 416-690 (FSVDNLLGEG…SEVVQALVVL (275 aa)) constitute a Protein kinase domain. ATP-binding positions include 422–430 (LGEGTFGRV) and Lys444. Residues 700–719 (TVGVDPSQRAGSADTTSDYM) form a disordered region. Residues 708–719 (RAGSADTTSDYM) are compositionally biased toward polar residues.

The protein belongs to the protein kinase superfamily. Ser/Thr protein kinase family. Expressed in seedlings, roots, stems, leaves, flowers and siliques.

It is found in the membrane. The protein is Protein STRUBBELIG-RECEPTOR FAMILY 6 (SRF6) of Arabidopsis thaliana (Mouse-ear cress).